A 332-amino-acid polypeptide reads, in one-letter code: UDP-galactose/UDP-glucose transporter 1 (332 aa).

8 consecutive transmembrane segments (helical) span residues 11 to 31 (ILLL…QGVL), 49 to 69 (HLAF…YIMI), 80 to 100 (APWW…AMGI), 112 to 132 (VLAK…VYGI), 135 to 155 (TFPE…FALL), 206 to 226 (IMLG…FGLP), 252 to 272 (ICGA…GSLA), and 301 to 317 (WGCV…QIYL). The short motif at 327 to 332 (KKKQKS) is the Di-lysine motif element.

Belongs to the nucleotide-sugar transporter family. UDP-galactose:UMP antiporter (TC 2.A.7.11) subfamily.

The protein localises to the endoplasmic reticulum membrane. In terms of biological role, essential sugar transporter required for the transport of UDP-galactose and UDP-glucose from the cytoplasm into the Golgi and the endoplasmic reticulum, to ensure quality control of protein folding. Essential for pollen development and involved in embryo sac progress. This chain is UDP-galactose/UDP-glucose transporter 1, found in Arabidopsis thaliana (Mouse-ear cress).